A 295-amino-acid polypeptide reads, in one-letter code: Probable alpha-L-glutamate ligase 1 (295 aa).

The ATP-grasp domain occupies 104–287 (MQLLSRKGIG…VANAIIEFIE (184 aa)). Residues Lys-141, 178–179 (EY), Asp-187, and 211–213 (RSN) contribute to the ATP site. Positions 248, 260, and 262 each coordinate Mg(2+). 3 residues coordinate Mn(2+): Asp-248, Glu-260, and Asn-262.

This sequence belongs to the RimK family. Requires Mg(2+) as cofactor. Mn(2+) serves as cofactor.

The chain is Probable alpha-L-glutamate ligase 1 from Shewanella denitrificans (strain OS217 / ATCC BAA-1090 / DSM 15013).